We begin with the raw amino-acid sequence, 196 residues long: Vacuolar iron transporter homolog 2 (196 aa).

Residues 1–31 are Cytoplasmic-facing; the sequence is MDQSGSNTNMDIEKESTTFDYSKRSQWLRAA. A helical membrane pass occupies residues 32–52; sequence VLGANDGLVSTASLMMGVGAV. The Vacuolar portion of the chain corresponds to 53 to 59; the sequence is KHDVKAM. Residues 60–80 traverse the membrane as a helical segment; it reads ILSGFAGMVAGACSMAIGEFV. At 81–112 the chain is on the cytoplasmic side; that stretch reads SVYSQYDIEVAQMERDSVEIEKEKLPSPMQAA. The chain crosses the membrane as a helical span at residues 113–133; that stretch reads AASALAFSAGAIVPLLAAAFV. Over 134 to 139 the chain is Vacuolar; sequence KEYKMR. The chain crosses the membrane as a helical span at residues 140-160; the sequence is IISVVVAVTVALMVFGWLGAA. Residues 161 to 172 lie on the Cytoplasmic side of the membrane; it reads LGKAPAVRSSAR. The helical transmembrane segment at 173–193 threads the bilayer; sequence VLFGGWLAMAVTFGLTKLIGL. Topologically, residues 194–196 are vacuolar; sequence YGL.

Belongs to the CCC1 family. Expressed in roots, leaves and inflorescences.

It is found in the vacuole membrane. It carries out the reaction Fe(2+)(in) = Fe(2+)(out). Its function is as follows. Vacuolar iron transporter involved in the transfer of iron ions from the cytosol to the vacuole for intracellular iron storage. Involved in regulation of cellular iron homeostasis. Vacuolar iron storage is required for seed embryo and seedling development. The sequence is that of Vacuolar iron transporter homolog 2 from Arabidopsis thaliana (Mouse-ear cress).